Reading from the N-terminus, the 122-residue chain is Class I hydrophobin 2 (122 aa).

The N-terminal stretch at 1–22 (MFARVSTLFAMFFLGLALMVSA) is a signal peptide. 4 disulfide bridges follow: C40-C101, C47-C95, C48-C81, and C102-C115.

This sequence belongs to the fungal hydrophobin family. Self-assembles to form functional amyloid fibrils called rodlets. Self-assembly into fibrillar rodlets occurs spontaneously at hydrophobic:hydrophilic interfaces and the rodlets further associate laterally to form amphipathic monolayers.

The protein resides in the secreted. It localises to the cell wall. In terms of biological role, aerial growth, conidiation, and dispersal of filamentous fungi in the environment rely upon a capability of their secreting small amphipathic proteins called hydrophobins (HPBs) with low sequence identity. Class I can self-assemble into an outermost layer of rodlet bundles on aerial cell surfaces, conferring cellular hydrophobicity that supports fungal growth, development and dispersal; whereas Class II form highly ordered films at water-air interfaces through intermolecular interactions but contribute nothing to the rodlet structure. Hah2 is a class I hydrophobin that is involved in aerial growth of mycelia, but does not play a role in pathogenesis. This chain is Class I hydrophobin 2, found in Heterobasidion annosum (Root rot fungus).